We begin with the raw amino-acid sequence, 203 residues long: ATP synthase subunit b (203 aa).

Residues Phe-14–Ser-34 form a helical membrane-spanning segment.

This sequence belongs to the ATPase B chain family. In terms of assembly, F-type ATPases have 2 components, F(1) - the catalytic core - and F(0) - the membrane proton channel. F(1) has five subunits: alpha(3), beta(3), gamma(1), delta(1), epsilon(1). F(0) has three main subunits: a(1), b(2) and c(10-14). The alpha and beta chains form an alternating ring which encloses part of the gamma chain. F(1) is attached to F(0) by a central stalk formed by the gamma and epsilon chains, while a peripheral stalk is formed by the delta and b chains.

It localises to the cell inner membrane. In terms of biological role, f(1)F(0) ATP synthase produces ATP from ADP in the presence of a proton or sodium gradient. F-type ATPases consist of two structural domains, F(1) containing the extramembraneous catalytic core and F(0) containing the membrane proton channel, linked together by a central stalk and a peripheral stalk. During catalysis, ATP synthesis in the catalytic domain of F(1) is coupled via a rotary mechanism of the central stalk subunits to proton translocation. Its function is as follows. Component of the F(0) channel, it forms part of the peripheral stalk, linking F(1) to F(0). The polypeptide is ATP synthase subunit b (Syntrophobacter fumaroxidans (strain DSM 10017 / MPOB)).